Reading from the N-terminus, the 92-residue chain is Progonadoliberin-1 (92 aa).

Residues 1 to 23 (METIPKLMAAVVLLTVCLEGCSS) form the signal peptide. At glutamine 24 the chain carries Pyrrolidone carboxylic acid. Position 33 is a glycine amide (glycine 33).

The protein belongs to the GnRH family. Post-translationally, the precursor is cleaved by ACE, which removes the Gly-Lys-Arg peptide at the C-terminus, leading to mature hormone. The mature form of Gonadoliberin-1 is also cleaved and degraded by ACE. Central nervous system.

Its subcellular location is the secreted. In terms of biological role, stimulates the secretion of gonadotropins; it stimulates the secretion of both luteinizing and follicle-stimulating hormones. The polypeptide is Progonadoliberin-1 (Gnrh1) (Rattus norvegicus (Rat)).